Here is a 497-residue protein sequence, read N- to C-terminus: Serine carboxypeptidase-like 20 (497 aa).

The N-terminal stretch at 1–29 (MSIITMVWLMKVFVFVTLLSLVFVITESA) is a signal peptide. Intrachain disulfides connect C90–C386, C254–C266, and C289–C353. N-linked (GlcNAc...) asparagine glycans are attached at residues N111 and N146. Residue S186 is part of the active site. A glycan (N-linked (GlcNAc...) asparagine) is linked at N249. A glycan (N-linked (GlcNAc...) asparagine) is linked at N405. D421 is a catalytic residue. Residue N463 is glycosylated (N-linked (GlcNAc...) asparagine). The active site involves H474. Residues 495 to 497 (SKI) carry the Microbody targeting signal motif.

The protein belongs to the peptidase S10 family. As to expression, ubiquitous.

It localises to the secreted. Functionally, probable carboxypeptidase. The chain is Serine carboxypeptidase-like 20 (SCPL20) from Arabidopsis thaliana (Mouse-ear cress).